The sequence spans 647 residues: DNA ligase (647 aa).

NAD(+)-binding positions include 30 to 34, 79 to 80, and Glu105; these read DEEYD and SM. Residue Lys107 is the N6-AMP-lysine intermediate of the active site. Positions 128, 162, and 301 each coordinate NAD(+). Residues Cys395, Cys398, Cys411, and Cys416 each coordinate Zn(2+). The 78-residue stretch at 570 to 647 folds into the BRCT domain; it reads KSDGVIFGKT…ESAFNELVKE (78 aa).

This sequence belongs to the NAD-dependent DNA ligase family. LigA subfamily. The cofactor is Mg(2+). Requires Mn(2+) as cofactor.

It carries out the reaction NAD(+) + (deoxyribonucleotide)n-3'-hydroxyl + 5'-phospho-(deoxyribonucleotide)m = (deoxyribonucleotide)n+m + AMP + beta-nicotinamide D-nucleotide.. In terms of biological role, DNA ligase that catalyzes the formation of phosphodiester linkages between 5'-phosphoryl and 3'-hydroxyl groups in double-stranded DNA using NAD as a coenzyme and as the energy source for the reaction. It is essential for DNA replication and repair of damaged DNA. This Campylobacter jejuni subsp. jejuni serotype O:23/36 (strain 81-176) protein is DNA ligase.